Consider the following 152-residue polypeptide: MGRFIFVSFGLLVVAASLSGTGADCLSGWSSYEGHCYKAFELYKTWEDAESFCMEGVKGGHLVSIESSGEADFVAQLISENMKRLDFFVWIGLRVQGDEKQCNSEWSDGSSVSYENWIESESKTCLGLEQQTKFRKWVNLYCGQRIPFVCEA.

An N-terminal signal peptide occupies residues 1–23 (MGRFIFVSFGLLVVAASLSGTGA). 3 cysteine pairs are disulfide-bonded: cysteine 25–cysteine 36, cysteine 53–cysteine 150, and cysteine 125–cysteine 142. The 120-residue stretch at 32–151 (YEGHCYKAFE…CGQRIPFVCE (120 aa)) folds into the C-type lectin domain. The Ca(2+) site is built by serine 64, glutamate 66, and glutamate 70. Glutamate 151 is a binding site for Ca(2+).

The protein belongs to the snaclec family. As to quaternary structure, heterodimer of subunits A and B; disulfide-linked. Expressed by the venom gland.

It is found in the secreted. Its function is as follows. Anticoagulant protein which binds to the gamma-carboxyglutamic acid-domain regions of factors IX (F9) and factor X (F10) in the presence of calcium with a 1 to 1 stoichiometry. The polypeptide is Snaclec coagulation factor IX/factor X-binding protein subunit A (Trimeresurus stejnegeri (Chinese green tree viper)).